Reading from the N-terminus, the 281-residue chain is MEFVKMHGLGNDFIVVNAMEPPLLDREDWEEIAVRICDRHYGIGGDGLILLFPSDKADIRWRILNSDGSEPEMCGNGIRCLARYVYERGIVAKRRIEVETLAGIIVPEIITDAAGAVTGVCVDMGEPRLQRHQIPMVGPEGPAVNQELVVGDAVVRVTALSMGNPHCLIYVNDIDEAPVTTLGPKVEVHPAFPAKTNVEFVQVVAPDEVQMRVWERGAGPTLACGTGACATVVGSVLNGYTDRKVTVHLAGGPLHIEWREENNRVYMTGPAVEVFRGELPL.

Substrate is bound by residues N11 and N65. C74 acts as the Proton donor in catalysis. Residues 75–76 (GN), N164, N197, and 215–216 (ER) contribute to the substrate site. C224 acts as the Proton acceptor in catalysis. Substrate is bound at residue 225–226 (GT).

The protein belongs to the diaminopimelate epimerase family. In terms of assembly, homodimer.

Its subcellular location is the cytoplasm. It catalyses the reaction (2S,6S)-2,6-diaminopimelate = meso-2,6-diaminopimelate. It participates in amino-acid biosynthesis; L-lysine biosynthesis via DAP pathway; DL-2,6-diaminopimelate from LL-2,6-diaminopimelate: step 1/1. In terms of biological role, catalyzes the stereoinversion of LL-2,6-diaminopimelate (L,L-DAP) to meso-diaminopimelate (meso-DAP), a precursor of L-lysine and an essential component of the bacterial peptidoglycan. This chain is Diaminopimelate epimerase, found in Heliobacterium modesticaldum (strain ATCC 51547 / Ice1).